Here is a 466-residue protein sequence, read N- to C-terminus: Glutamate--tRNA ligase (466 aa).

A 'HIGH' region motif is present at residues 10-20; that stretch reads PSPTGYLHVGG. Zn(2+)-binding residues include cysteine 99, cysteine 101, cysteine 126, and aspartate 128. The 'KMSKS' region motif lies at 237–241; it reads RLSKR. Residue lysine 240 coordinates ATP.

Belongs to the class-I aminoacyl-tRNA synthetase family. Glutamate--tRNA ligase type 1 subfamily. As to quaternary structure, monomer. Requires Zn(2+) as cofactor.

It is found in the cytoplasm. It carries out the reaction tRNA(Glu) + L-glutamate + ATP = L-glutamyl-tRNA(Glu) + AMP + diphosphate. Functionally, catalyzes the attachment of glutamate to tRNA(Glu) in a two-step reaction: glutamate is first activated by ATP to form Glu-AMP and then transferred to the acceptor end of tRNA(Glu). In Geobacter sulfurreducens (strain ATCC 51573 / DSM 12127 / PCA), this protein is Glutamate--tRNA ligase.